Here is a 67-residue protein sequence, read N- to C-terminus: Large ribosomal subunit protein bL35 (67 aa).

It belongs to the bacterial ribosomal protein bL35 family.

The chain is Large ribosomal subunit protein bL35 from Rhizobium etli (strain ATCC 51251 / DSM 11541 / JCM 21823 / NBRC 15573 / CFN 42).